Here is a 622-residue protein sequence, read N- to C-terminus: uncharacterized protein (622 aa).

[4Fe-4S] cluster-binding residues include Cys302, Cys306, Cys310, and Cys521.

It belongs to the AOR/FOR family. It depends on [4Fe-4S] cluster as a cofactor.

This is an uncharacterized protein from Methanocaldococcus jannaschii (strain ATCC 43067 / DSM 2661 / JAL-1 / JCM 10045 / NBRC 100440) (Methanococcus jannaschii).